The following is an 828-amino-acid chain: Cadherin-22 (828 aa).

The first 34 residues, Met-1–Gly-34, serve as a signal peptide directing secretion. Residues Leu-36 to Pro-624 are Extracellular-facing. Cadherin domains follow at residues Trp-64–Phe-168, Leu-169–Phe-277, Pro-278–Phe-394, Arg-395–Glu-498, and Leu-499–Phe-616. The N-linked (GlcNAc...) asparagine glycan is linked to Asn-162. Residues Asn-466 and Asn-612 are each glycosylated (N-linked (GlcNAc...) asparagine). The chain crosses the membrane as a helical span at residues Gly-625–Leu-645. Over Thr-646–Ser-828 the chain is Cytoplasmic. Positions Gly-702–Gly-719 are enriched in gly residues. A disordered region spans residues Gly-702–Ser-745.

Its subcellular location is the cell membrane. Its function is as follows. Cadherins are calcium-dependent cell adhesion proteins. They preferentially interact with themselves in a homophilic manner in connecting cells; cadherins may thus contribute to the sorting of heterogeneous cell types. PB-cadherins may have a role in the morphological organization of pituitary gland and brain tissues. The sequence is that of Cadherin-22 (CDH22) from Homo sapiens (Human).